Consider the following 254-residue polypeptide: HTH-type transcriptional regulator GolR (254 aa).

The HTH deoR-type domain maps to 3-58 (PFERQNKIIHLLDQNNKITVPELSRILDVSISTIRNDLSALEESGMIKKVHGGAVL). Positions 20–39 (ITVPELSRILDVSISTIRND) form a DNA-binding region, H-T-H motif.

Involved in the glycerol metabolism. Repressor of the gol operon for glycerol metabolism. This chain is HTH-type transcriptional regulator GolR, found in Listeria innocua serovar 6a (strain ATCC BAA-680 / CLIP 11262).